Consider the following 444-residue polypeptide: NADH-ubiquinone oxidoreductase chain 4 (444 aa).

Helical transmembrane passes span 4–24 (YLFM…WWLV), 28–48 (IFLL…LSMI), 53–73 (GVDF…CLMI), 87–107 (NFFV…FSSL), 109–129 (LFSF…LILG), 141–161 (VYLM…LFSI), 173–193 (LIDF…AFLV), 212–232 (PISG…YGIF), 245–265 (FNYF…FVCF), 272–294 (SLIA…TMNW), 306–326 (GHGI…ELLG), 330–350 (LLIN…WFLL), and 373–393 (IISW…FSAV).

It belongs to the complex I subunit 4 family.

The protein localises to the mitochondrion membrane. It catalyses the reaction a ubiquinone + NADH + 5 H(+)(in) = a ubiquinol + NAD(+) + 4 H(+)(out). In terms of biological role, core subunit of the mitochondrial membrane respiratory chain NADH dehydrogenase (Complex I) that is believed to belong to the minimal assembly required for catalysis. Complex I functions in the transfer of electrons from NADH to the respiratory chain. The immediate electron acceptor for the enzyme is believed to be ubiquinone. The sequence is that of NADH-ubiquinone oxidoreductase chain 4 (ND4) from Locusta migratoria (Migratory locust).